Reading from the N-terminus, the 432-residue chain is Adenylosuccinate synthetase (432 aa).

Residues 12 to 18 and 40 to 42 each bind GTP; these read GDEGKGK and GHT. Asp-13 serves as the catalytic Proton acceptor. Mg(2+) contacts are provided by Asp-13 and Gly-40. IMP is bound by residues 13-16, 38-41, Thr-129, Arg-143, Gln-224, Thr-239, and Arg-303; these read DEGK and NAGH. His-41 serves as the catalytic Proton donor. 299-305 is a binding site for substrate; the sequence is VTTGRRR. GTP-binding positions include Arg-305, 331-333, and 413-415; these read KLD and GVG.

The protein belongs to the adenylosuccinate synthetase family. Homodimer. The cofactor is Mg(2+).

The protein resides in the cytoplasm. The enzyme catalyses IMP + L-aspartate + GTP = N(6)-(1,2-dicarboxyethyl)-AMP + GDP + phosphate + 2 H(+). The protein operates within purine metabolism; AMP biosynthesis via de novo pathway; AMP from IMP: step 1/2. Its function is as follows. Plays an important role in the de novo pathway of purine nucleotide biosynthesis. Catalyzes the first committed step in the biosynthesis of AMP from IMP. The chain is Adenylosuccinate synthetase from Mycobacterium avium (strain 104).